The chain runs to 223 residues: Sigma non-opioid intracellular receptor 1 (223 aa).

The Lumenal portion of the chain corresponds to M1–W9. Positions Q2–R8 are targeting to endoplasmic reticulum-associated lipid droplets. A helical membrane pass occupies residues L10–L30. At G31–P223 the chain is on the cytoplasmic side. Positions S99 to L106 are important for ligand-binding. The interval V177 to P223 is C-terminal hydrophobic region.

Belongs to the ERG2 family. In terms of assembly, homotrimer. Forms a ternary complex with ANK2 and ITPR3. The complex is disrupted by agonists. Interacts with KCNA4. Interacts with KCNA2; cocaine consumption leads to increased interaction. Interacts with RNF112 in an oxidative stress-regulated manner. Ubiquitously expressed with higher expression in liver, kidney and steroid-producing tissues such as placenta, ovary and adrenal gland.

It localises to the nucleus inner membrane. Its subcellular location is the nucleus outer membrane. It is found in the nucleus envelope. The protein resides in the cytoplasmic vesicle. The protein localises to the endoplasmic reticulum membrane. It localises to the membrane. Its subcellular location is the lipid droplet. It is found in the cell junction. The protein resides in the cell membrane. The protein localises to the cell projection. It localises to the growth cone. Its subcellular location is the postsynaptic density membrane. Functions in lipid transport from the endoplasmic reticulum and is involved in a wide array of cellular functions probably through regulation of the biogenesis of lipid microdomains at the plasma membrane. Involved in the regulation of different receptors it plays a role in BDNF signaling and EGF signaling. Also regulates ion channels like the potassium channel and could modulate neurotransmitter release. Plays a role in calcium signaling through modulation together with ANK2 of the ITP3R-dependent calcium efflux at the endoplasmic reticulum. Plays a role in several other cell functions including proliferation, survival and death. Originally identified for its ability to bind various psychoactive drugs it is involved in learning processes, memory and mood alteration. Necessary for proper mitochondrial axonal transport in motor neurons, in particular the retrograde movement of mitochondria. Plays a role in protecting cells against oxidative stress-induced cell death via its interaction with RNF112. The sequence is that of Sigma non-opioid intracellular receptor 1 (SIGMAR1) from Cavia porcellus (Guinea pig).